We begin with the raw amino-acid sequence, 305 residues long: Mas-related G-protein coupled receptor member A2B (305 aa).

Topologically, residues 1–17 are extracellular; that stretch reads MDETLPGSINIRILIPK. A helical membrane pass occupies residues 18–38; sequence LMIIIFGLVGLMGNAIVFWLL. Topologically, residues 39 to 53 are cytoplasmic; that stretch reads GFHLRRNAFSVYILN. A helical transmembrane segment spans residues 54-74; that stretch reads LALADFLFLLSSIIASTLFLL. Residues 75-78 lie on the Extracellular side of the membrane; that stretch reads KVSY. Residues 79–99 form a helical membrane-spanning segment; it reads LSIIFHLCFNTIMMVVYITGI. The Cytoplasmic portion of the chain corresponds to 100–132; the sequence is SMLSAISTECCLSVLCPTWYRCHRPVHTSTVMC. The chain crosses the membrane as a helical span at residues 133-153; sequence AVIWVLSLLICILNSYFCAVL. Residues 154–167 are Extracellular-facing; the sequence is HTRYDNDNECLATN. A helical transmembrane segment spans residues 168–188; the sequence is IFTASYMIFLLVVLCLSSLAL. Residues 189–207 lie on the Cytoplasmic side of the membrane; that stretch reads LARLFCGAGQMKLTRFHVT. Residues 208–228 form a helical membrane-spanning segment; the sequence is ILLTLLVFLLCGLPFVIYCIL. Over 229 to 244 the chain is Extracellular; sequence LFKIKDDFHVLDVNFY. Residues 245 to 265 form a helical membrane-spanning segment; the sequence is LALEVLTAINSCANPIIYFFV. Over 266–305 the chain is Cytoplasmic; it reads GSFRHQLKHQTLKMVLQSALQDTPETAENMVEMSSNKAEP.

The protein belongs to the G-protein coupled receptor 1 family. Mas subfamily. Expressed in a subset of sensory neurons that includes nociceptors. Expressed in the subclass of non-peptidergic sensory neurons that are IB4(+) and VR1(-).

The protein localises to the cell membrane. Functionally, orphan receptor. May be a receptor for RFamide-family neuropeptides such as NPFF and NPAF, which are analgesic in vivo. May regulate nociceptor function and/or development, including the sensation or modulation of pain. The chain is Mas-related G-protein coupled receptor member A2B from Mus musculus (Mouse).